Here is a 184-residue protein sequence, read N- to C-terminus: NADH-quinone oxidoreductase subunit B (184 aa).

C37, C38, C103, and C132 together coordinate [4Fe-4S] cluster.

This sequence belongs to the complex I 20 kDa subunit family. In terms of assembly, NDH-1 is composed of 14 different subunits. Subunits NuoB, C, D, E, F, and G constitute the peripheral sector of the complex. It depends on [4Fe-4S] cluster as a cofactor.

The protein resides in the cell membrane. The catalysed reaction is a quinone + NADH + 5 H(+)(in) = a quinol + NAD(+) + 4 H(+)(out). NDH-1 shuttles electrons from NADH, via FMN and iron-sulfur (Fe-S) centers, to quinones in the respiratory chain. The immediate electron acceptor for the enzyme in this species is believed to be a menaquinone. Couples the redox reaction to proton translocation (for every two electrons transferred, four hydrogen ions are translocated across the cytoplasmic membrane), and thus conserves the redox energy in a proton gradient. The polypeptide is NADH-quinone oxidoreductase subunit B (Rhodococcus opacus (strain B4)).